Reading from the N-terminus, the 167-residue chain is HVA22-like protein b (167 aa).

3 helical membrane-spanning segments follow: residues 18–38 (VIAGPVISLVYPLYASVRAIE), 47–67 (QWLTYWALYSLIKLFELTFFR), and 68–88 (LLEWIPLYPYAKLALTSWLVL).

The protein belongs to the DP1 family. In terms of tissue distribution, predominantly expressed in flower buds.

The protein resides in the membrane. The sequence is that of HVA22-like protein b (HVA22B) from Arabidopsis thaliana (Mouse-ear cress).